The primary structure comprises 252 residues: UPF0273 protein MK0039 (252 aa).

In terms of domain architecture, KaiC spans 4-248 (ERVSTGIPGM…VFVKERGEVR (245 aa)). 31 to 38 (GGPGTGKT) contributes to the ATP binding site.

It belongs to the UPF0273 family.

The sequence is that of UPF0273 protein MK0039 from Methanopyrus kandleri (strain AV19 / DSM 6324 / JCM 9639 / NBRC 100938).